The chain runs to 638 residues: Factor of DNA methylation 3 (638 aa).

A coiled-coil region spans residues 318–497 (FNRIFADHEK…RALISNLRDM (180 aa)).

Its function is as follows. Acts in association with FDM4 and FDM5 for RNA-directed DNA methylation (RdDM). The polypeptide is Factor of DNA methylation 3 (Arabidopsis thaliana (Mouse-ear cress)).